The primary structure comprises 326 residues: Virulence-associated V antigen (326 aa).

It is found in the secreted. Its function is as follows. Possibly involved in calcium regulation of YOP expression, which includes the export process. This is Virulence-associated V antigen (lcrV) from Yersinia pestis.